A 299-amino-acid chain; its full sequence is Probable endonuclease 4 (299 aa).

Positions 69, 110, 145, 179, 182, 214, 227, 229, and 259 each coordinate Zn(2+).

Belongs to the AP endonuclease 2 family. Zn(2+) is required as a cofactor.

The enzyme catalyses Endonucleolytic cleavage to 5'-phosphooligonucleotide end-products.. Its function is as follows. Endonuclease IV plays a role in DNA repair. It cleaves phosphodiester bonds at apurinic or apyrimidinic (AP) sites, generating a 3'-hydroxyl group and a 5'-terminal sugar phosphate. The sequence is that of Probable endonuclease 4 from Geobacillus kaustophilus (strain HTA426).